A 60-amino-acid polypeptide reads, in one-letter code: Large ribosomal subunit protein bL32 (60 aa).

Basic residues predominate over residues 1–20 (MACPKKKTSKSKRSMRRAAW). Positions 1-22 (MACPKKKTSKSKRSMRRAAWKR) are disordered.

The protein belongs to the bacterial ribosomal protein bL32 family.

This chain is Large ribosomal subunit protein bL32, found in Thermosynechococcus vestitus (strain NIES-2133 / IAM M-273 / BP-1).